We begin with the raw amino-acid sequence, 209 residues long: LexA repressor (209 aa).

The H-T-H motif DNA-binding region spans 30–50; the sequence is RVEIAREIGFKSPNAAEEHLK. Catalysis depends on for autocatalytic cleavage activity residues Ser-126 and Lys-163.

The protein belongs to the peptidase S24 family. In terms of assembly, homodimer.

It carries out the reaction Hydrolysis of Ala-|-Gly bond in repressor LexA.. Its function is as follows. Represses a number of genes involved in the response to DNA damage (SOS response), including recA and lexA. In the presence of single-stranded DNA, RecA interacts with LexA causing an autocatalytic cleavage which disrupts the DNA-binding part of LexA, leading to derepression of the SOS regulon and eventually DNA repair. This Glaesserella parasuis serovar 5 (strain SH0165) (Haemophilus parasuis) protein is LexA repressor.